We begin with the raw amino-acid sequence, 676 residues long: Methionine--tRNA ligase (676 aa).

Positions 15–25 match the 'HIGH' region motif; it reads PYANGPIHLGH. Cys146, Cys149, Cys159, and Cys162 together coordinate Zn(2+). The 'KMSKS' region motif lies at 332 to 336; sequence KMSKS. Lys335 is a binding site for ATP. The tRNA-binding domain occupies 575–676; that stretch reads DFAKIDLRIA…EGAQPGMRVK (102 aa).

The protein belongs to the class-I aminoacyl-tRNA synthetase family. MetG type 1 subfamily. Homodimer. Zn(2+) serves as cofactor.

It localises to the cytoplasm. The catalysed reaction is tRNA(Met) + L-methionine + ATP = L-methionyl-tRNA(Met) + AMP + diphosphate. Its function is as follows. Is required not only for elongation of protein synthesis but also for the initiation of all mRNA translation through initiator tRNA(fMet) aminoacylation. This is Methionine--tRNA ligase from Shewanella sp. (strain MR-4).